The sequence spans 152 residues: Neuropeptide W (152 aa).

The N-terminal stretch at 1-32 (MGARGPGPGATARRRLLALLLLLLLLPLPARA) is a signal peptide. Positions 65–152 (ALRPAAGPLA…LGASSWTSAE (88 aa)) are excised as a propeptide. Disordered regions lie at residues 79 to 108 (GQDVPPRGPSARNALSPGPAPRDAPLLPPG) and 122 to 152 (SGIPVSAPRSPRARGSEPQPELGASSWTSAE). Residues 96–106 (GPAPRDAPLLP) show a composition bias toward pro residues.

The protein belongs to the neuropeptide B/W family.

The protein localises to the secreted. Plays a regulatory role in the organization of neuroendocrine signals accessing the anterior pituitary gland. Stimulates water drinking and food intake. May play a role in the hypothalamic response to stress. The polypeptide is Neuropeptide W (NPW) (Sus scrofa (Pig)).